Reading from the N-terminus, the 367-residue chain is 3-isopropylmalate dehydrogenase (367 aa).

An NAD(+)-binding site is contributed by 75 to 88 (GPKWDGIERSKRPE). Residues Arg95, Arg105, Arg133, and Asp230 each coordinate substrate. Mg(2+)-binding residues include Asp230, Asp254, and Asp258. 288 to 300 (GSAPDIAGQDIAN) lines the NAD(+) pocket.

The protein belongs to the isocitrate and isopropylmalate dehydrogenases family. LeuB type 1 subfamily. As to quaternary structure, homodimer. Requires Mg(2+) as cofactor. The cofactor is Mn(2+).

Its subcellular location is the cytoplasm. It carries out the reaction (2R,3S)-3-isopropylmalate + NAD(+) = 4-methyl-2-oxopentanoate + CO2 + NADH. Its pathway is amino-acid biosynthesis; L-leucine biosynthesis; L-leucine from 3-methyl-2-oxobutanoate: step 3/4. In terms of biological role, catalyzes the oxidation of 3-carboxy-2-hydroxy-4-methylpentanoate (3-isopropylmalate) to 3-carboxy-4-methyl-2-oxopentanoate. The product decarboxylates to 4-methyl-2 oxopentanoate. In Psychrobacter arcticus (strain DSM 17307 / VKM B-2377 / 273-4), this protein is 3-isopropylmalate dehydrogenase.